The sequence spans 206 residues: Putative amino-acid transporter YggA (206 aa).

Helical transmembrane passes span 1 to 21, 37 to 57, 65 to 85, 116 to 136, 148 to 168, and 185 to 205; these read MFATTLQGFTLGLAMIIPIGA, LLAATLCCLCDLILIGIGVFG, SPIGLALLTWGGVLFLCWFGI, LGVTLLNPHVYLDTLMLLGSF, FAAGAMLASLVWFYSLAFGAA, and TIVGLIMLGLALQLASGALLA.

The protein belongs to the LysE/ArgO transporter (TC 2.A.75) family.

Its subcellular location is the cell membrane. The chain is Putative amino-acid transporter YggA (yggA) from Aeromonas salmonicida.